The sequence spans 386 residues: Acetylornithine aminotransferase (386 aa).

Pyridoxal 5'-phosphate contacts are provided by residues 96–97 (GA) and F123. R126 is a N(2)-acetyl-L-ornithine binding site. A pyridoxal 5'-phosphate-binding site is contributed by 208–211 (DEVQ). An N6-(pyridoxal phosphate)lysine modification is found at K237. S265 contributes to the N(2)-acetyl-L-ornithine binding site. Position 266 (T266) interacts with pyridoxal 5'-phosphate.

Belongs to the class-III pyridoxal-phosphate-dependent aminotransferase family. ArgD subfamily. As to quaternary structure, homodimer. Pyridoxal 5'-phosphate is required as a cofactor.

It localises to the cytoplasm. The catalysed reaction is N(2)-acetyl-L-ornithine + 2-oxoglutarate = N-acetyl-L-glutamate 5-semialdehyde + L-glutamate. It participates in amino-acid biosynthesis; L-arginine biosynthesis; N(2)-acetyl-L-ornithine from L-glutamate: step 4/4. The polypeptide is Acetylornithine aminotransferase (Bacillus anthracis).